Reading from the N-terminus, the 209-residue chain is Orotate phosphoribosyltransferase (209 aa).

5-phospho-alpha-D-ribose 1-diphosphate contacts are provided by residues R96, K100, H102, and 122–130; that span reads EDLISTGGS. S126 provides a ligand contact to orotate.

It belongs to the purine/pyrimidine phosphoribosyltransferase family. PyrE subfamily. As to quaternary structure, homodimer. The cofactor is Mg(2+).

The enzyme catalyses orotidine 5'-phosphate + diphosphate = orotate + 5-phospho-alpha-D-ribose 1-diphosphate. The protein operates within pyrimidine metabolism; UMP biosynthesis via de novo pathway; UMP from orotate: step 1/2. Its function is as follows. Catalyzes the transfer of a ribosyl phosphate group from 5-phosphoribose 1-diphosphate to orotate, leading to the formation of orotidine monophosphate (OMP). This chain is Orotate phosphoribosyltransferase, found in Streptococcus gordonii (strain Challis / ATCC 35105 / BCRC 15272 / CH1 / DL1 / V288).